We begin with the raw amino-acid sequence, 428 residues long: Transcription factor Sp7 (428 aa).

The interval 30–84 (SSPLRDSTTLGKGGTKKPYADLSAPKTMGDAYPAPFSSTNGLLSPAGSPPAPASG) is disordered. 2 positions are modified to N6-propionyllysine: K41 and K45. A Glycyl lysine isopeptide (Lys-Gly) (interchain with G-Cter in ubiquitin) cross-link involves residue K55. The 9aaTAD signature appears at 153-161 (TPWWDMHPG). Residue K227 forms a Glycyl lysine isopeptide (Lys-Gly) (interchain with G-Cter in ubiquitin) linkage. The disordered stretch occupies residues 229-257 (KAVGNSGQLEGSGAAKPPRGAGTGGSGGY). 3 consecutive C2H2-type zinc fingers follow at residues 291 to 315 (HSCH…LRWH), 321 to 345 (FVCN…VRTH), and 351 to 373 (FTCL…QRTH). N6-propionyllysine occurs at positions 358 and 368. The segment at 364 to 428 (DHLSKHQRTH…SPEQSNLLEI (65 aa)) is disordered.

It belongs to the Sp1 C2H2-type zinc-finger protein family. In terms of assembly, interacts with RIOX1; the interaction is direct and inhibits transcription activator activity. In terms of processing, propionylated. Depropionylation at Lys-368 by SIRT7 activates transcription factor activity and positively regulates bone formation by osteoblasts. Ubiquitination at leads to proteasomal degradation. SP7 is a short-live protein with an endogenous half-life of approximately 12 hours. As to expression, osteoblast/chondrocyte specific.

The protein localises to the nucleus. In terms of biological role, transcriptional activator essential for osteoblast differentiation. Binds to SP1 and EKLF consensus sequences and to other G/C-rich sequences. The sequence is that of Transcription factor Sp7 (Sp7) from Mus musculus (Mouse).